Here is a 310-residue protein sequence, read N- to C-terminus: Keratin, type II cytoskeletal 8 (310 aa).

The tract at residues 1-38 (QRTLKVSSSGPRSFSSRSFSSGPSSRISSSSYSRVGSN) is disordered. A Glycyl lysine isopeptide (Lys-Gly) (interchain with G-Cter in SUMO2) cross-link involves residue K5. A phosphoserine mark is found at S7, S9, S15, and S16. Low complexity predominate over residues 7-38 (SSSGPRSFSSRSFSSGPSSRISSSSYSRVGSN). R17 is subject to Omega-N-methylarginine. A phosphoserine mark is found at S18, S21, and S25. Position 26 is an omega-N-methylarginine (R26). Phosphoserine is present on residues S28, S31, and S33. At R34 the chain carries Omega-N-methylarginine. Residue S37 is modified to Phosphoserine. R42 bears the Asymmetric dimethylarginine; alternate mark. R42 carries the post-translational modification Omega-N-methylarginine; alternate. The tract at residues 92-127 (EKEQIKTLNNKFASFIDKVRFLEQQNKILETKWSFL) is coil 1A. In terms of domain architecture, IF rod spans 92–310 (EKEQIKTLNN…LRHTKTEISE (219 aa)). Residue K102 is modified to N6-malonyllysine. Residues K123 and K131 each participate in a glycyl lysine isopeptide (Lys-Gly) (interchain with G-Cter in SUMO2) cross-link. The linker 1 stretch occupies residues 128-144 (QQQKTSQSNLDGLFEKY). Residues 145 to 236 (ITNLRRQLDS…HLYEEEIKEM (92 aa)) are coil 1B. K198 participates in a covalent cross-link: Glycyl lysine isopeptide (Lys-Gly) (interchain with G-Cter in SUMO1); alternate. Residue K198 forms a Glycyl lysine isopeptide (Lys-Gly) (interchain with G-Cter in SUMO2); alternate linkage. Position 208 is an N6-acetyllysine (K208). A Phosphotyrosine modification is found at Y229. The tract at residues 237 to 260 (QSQISDTSVVVSMDNSRSLDLDGI) is linker 12. A phosphoserine mark is found at S254 and S275. The segment at 261-310 (IADVRAQYEEIANRSRAEAETMYQIKYEELQLLAGKHGDDLRHTKTEISE) is coil 2. K286 is covalently cross-linked (Glycyl lysine isopeptide (Lys-Gly) (interchain with G-Cter in SUMO2)). K296 participates in a covalent cross-link: Glycyl lysine isopeptide (Lys-Gly) (interchain with G-Cter in SUMO2); alternate. K296 carries the post-translational modification N6-acetyllysine; alternate. K305 participates in a covalent cross-link: Glycyl lysine isopeptide (Lys-Gly) (interchain with G-Cter in SUMO2).

It belongs to the intermediate filament family. As to quaternary structure, heterotetramer of two type I and two type II keratins. Forms a heterodimer with KRT18. Associates with KRT20. Interacts with PNN. When associated with KRT19, interacts with DMD. Interacts with APEX1. Interacts with GPER1. Interacts with EPPK1. Interacts with PKP1 and PKP2. In terms of processing, O-glycosylated. O-GlcNAcylation at multiple sites increases solubility, and decreases stability by inducing proteasomal degradation. O-glycosylated (O-GlcNAcylated), in a cell cycle-dependent manner.

It localises to the cytoplasm. Its subcellular location is the nucleus. The protein localises to the nucleoplasm. The protein resides in the nucleus matrix. Its function is as follows. Together with KRT19, helps to link the contractile apparatus to dystrophin at the costameres of striated muscle. The chain is Keratin, type II cytoskeletal 8 from Potorous tridactylus (Potoroo).